The sequence spans 633 residues: Threonine--tRNA ligase (633 aa).

Residues 1–61 (MINIHFSNNL…IENCTFEVIT (61 aa)) enclose the TGS domain. Positions 242 to 533 (DHRKIGRELE…LIEHHSGKFP (292 aa)) are catalytic. 3 residues coordinate Zn(2+): Cys333, His384, and His510.

It belongs to the class-II aminoacyl-tRNA synthetase family. Homodimer. Zn(2+) is required as a cofactor.

Its subcellular location is the cytoplasm. The catalysed reaction is tRNA(Thr) + L-threonine + ATP = L-threonyl-tRNA(Thr) + AMP + diphosphate + H(+). Catalyzes the attachment of threonine to tRNA(Thr) in a two-step reaction: L-threonine is first activated by ATP to form Thr-AMP and then transferred to the acceptor end of tRNA(Thr). Also edits incorrectly charged L-seryl-tRNA(Thr). The sequence is that of Threonine--tRNA ligase from Ehrlichia chaffeensis (strain ATCC CRL-10679 / Arkansas).